Reading from the N-terminus, the 410-residue chain is Beta-arrestin-1 (410 aa).

The tract at residues 1 to 163 (MGDKGTRVFK…LEEKIHKRNS (163 aa)) is interaction with SRC. The interaction with CHRM2 stretch occupies residues 45–86 (PEYLKERRVYVTLTCAFRYGREDLDVLGLTFRKDLFVANVQS). At tyrosine 47 the chain carries Phosphotyrosine. 1D-myo-inositol hexakisphosphate-binding residues include lysine 250, methionine 255, lysine 324, and lysine 326. Positions 318 to 410 (IVSYKVKVKL…GTGSPQLNNR (93 aa)) are interaction with TRAF6. The [DE]-X(1,2)-F-X-X-[FL]-X-X-X-R motif signature appears at 385–395 (RQRLKGMKDDK). Residues 389–410 (KGMKDDKEEEENGTGSPQLNNR) form a disordered region. Over residues 401 to 410 (GTGSPQLNNR) the composition is skewed to polar residues. Serine 404 carries the post-translational modification Phosphoserine; by GRK5.

The protein belongs to the arrestin family. As to quaternary structure, monomer. Homodimer. Homooligomer; the self-association is mediated by InsP6-binding. Heterooligomer with ARRB2; the association is mediated by InsP6-binding. Interacts with ADRB2 (phosphorylated). Interacts with CHRM2 (phosphorylated). Interacts with LHCGR. Interacts with CYTH2 and CASR. Interacts with AP2B1 (dephosphorylated); phosphorylation of AP2B1 disrupts the interaction. Interacts (dephosphorylated at Ser-404) with CLTC. Interacts with CCR2 and GRK2. Interacts with CRR5. Interacts with PTAFR (phosphorylated on serine residues). Interacts with CLTC and MAP2K3. Interacts with CREB1. Interacts with TRAF6. Interacts with IGF1R and MDM2. Interacts with C5AR1. Interacts with PDE4D. Interacts with SRC (via the SH3 domain and the protein kinase domain); the interaction is independent of the phosphorylation state of SRC C-terminus. Interacts with TACR1. Interacts with RAF1. Interacts with CHUK, IKBKB and MAP3K14. Interacts with DVL1; the interaction is enhanced by phosphorylation of DVL1. Interacts with DVL2; the interaction is enhanced by phosphorylation of DVL2. Interacts with IGF1R. Associates with MAP kinase p38. Part of a MAPK signaling complex consisting of TACR1, ARRB1, SRC, MAPK1 (activated) and MAPK3 (activated). Part of a MAPK signaling complex consisting of F2RL1, ARRB1, RAF1, MAPK1 (activated) and MAPK3 (activated). Interacts with GPR143. Interacts with MAP2K4/MKK4. Interacts with HCK and CXCR1 (phosphorylated). Interacts with ACKR3 and ACKR4. Interacts with ARRDC1; the interaction is direct. Interacts with GPR61, GPR62 and GPR135. Constitutively phosphorylated at in the cytoplasm. At the plasma membrane, is rapidly dephosphorylated, a process that is required for clathrin binding and ADRB2 endocytosis but not for ADRB2 binding and desensitization. Once internalized, is rephosphorylated. Post-translationally, the ubiquitination status appears to regulate the formation and trafficking of beta-arrestin-GPCR complexes and signaling. Ubiquitination appears to occur GPCR-specific. Ubiquitinated by MDM2; the ubiquitination is required for rapid internalization of ADRB2. Deubiquitinated by USP33; the deubiquitination leads to a dissociation of the beta-arrestin-GPCR complex. Stimulation of a class A GPCR, such as ADRB2, induces transient ubiquitination and subsequently promotes association with USP33.

Its subcellular location is the cytoplasm. The protein localises to the nucleus. It localises to the cell membrane. The protein resides in the membrane. It is found in the clathrin-coated pit. Its subcellular location is the cell projection. The protein localises to the pseudopodium. It localises to the cytoplasmic vesicle. Functionally, functions in regulating agonist-mediated G-protein coupled receptor (GPCR) signaling by mediating both receptor desensitization and resensitization processes. During homologous desensitization, beta-arrestins bind to the GPRK-phosphorylated receptor and sterically preclude its coupling to the cognate G-protein; the binding appears to require additional receptor determinants exposed only in the active receptor conformation. The beta-arrestins target many receptors for internalization by acting as endocytic adapters (CLASPs, clathrin-associated sorting proteins) and recruiting the GPRCs to the adapter protein 2 complex 2 (AP-2) in clathrin-coated pits (CCPs). However, the extent of beta-arrestin involvement appears to vary significantly depending on the receptor, agonist and cell type. Internalized arrestin-receptor complexes traffic to intracellular endosomes, where they remain uncoupled from G-proteins. Two different modes of arrestin-mediated internalization occur. Class A receptors, like ADRB2, OPRM1, ENDRA, D1AR and ADRA1B dissociate from beta-arrestin at or near the plasma membrane and undergo rapid recycling. Class B receptors, like AVPR2, AGTR1, NTSR1, TRHR and TACR1 internalize as a complex with arrestin and traffic with it to endosomal vesicles, presumably as desensitized receptors, for extended periods of time. Receptor resensitization then requires that receptor-bound arrestin is removed so that the receptor can be dephosphorylated and returned to the plasma membrane. Involved in internalization of P2RY4 and UTP-stimulated internalization of P2RY2. Involved in phosphorylation-dependent internalization of OPRD1 ands subsequent recycling. Involved in the degradation of cAMP by recruiting cAMP phosphodiesterases to ligand-activated receptors. Beta-arrestins function as multivalent adapter proteins that can switch the GPCR from a G-protein signaling mode that transmits short-lived signals from the plasma membrane via small molecule second messengers and ion channels to a beta-arrestin signaling mode that transmits a distinct set of signals that are initiated as the receptor internalizes and transits the intracellular compartment. Acts as a signaling scaffold for MAPK pathways such as MAPK1/3 (ERK1/2). ERK1/2 activated by the beta-arrestin scaffold is largely excluded from the nucleus and confined to cytoplasmic locations such as endocytic vesicles, also called beta-arrestin signalosomes. Recruits c-Src/SRC to ADRB2 resulting in ERK activation. GPCRs for which the beta-arrestin-mediated signaling relies on both ARRB1 and ARRB2 (codependent regulation) include ADRB2, F2RL1 and PTH1R. For some GPCRs the beta-arrestin-mediated signaling relies on either ARRB1 or ARRB2 and is inhibited by the other respective beta-arrestin form (reciprocal regulation). Inhibits ERK1/2 signaling in AGTR1- and AVPR2-mediated activation (reciprocal regulation). Is required for SP-stimulated endocytosis of NK1R and recruits c-Src/SRC to internalized NK1R resulting in ERK1/2 activation, which is required for the antiapoptotic effects of SP. Is involved in proteinase-activated F2RL1-mediated ERK activity. Acts as a signaling scaffold for the AKT1 pathway. Is involved in alpha-thrombin-stimulated AKT1 signaling. Is involved in IGF1-stimulated AKT1 signaling leading to increased protection from apoptosis. Involved in activation of the p38 MAPK signaling pathway and in actin bundle formation. Involved in F2RL1-mediated cytoskeletal rearrangement and chemotaxis. Involved in AGTR1-mediated stress fiber formation by acting together with GNAQ to activate RHOA. Appears to function as signaling scaffold involved in regulation of MIP-1-beta-stimulated CCR5-dependent chemotaxis. Involved in attenuation of NF-kappa-B-dependent transcription in response to GPCR or cytokine stimulation by interacting with and stabilizing CHUK. May serve as nuclear messenger for GPCRs. Involved in OPRD1-stimulated transcriptional regulation by translocating to CDKN1B and FOS promoter regions and recruiting EP300 resulting in acetylation of histone H4. Involved in regulation of LEF1 transcriptional activity via interaction with DVL1 and/or DVL2 Also involved in regulation of receptors other than GPCRs. Involved in Toll-like receptor and IL-1 receptor signaling through the interaction with TRAF6 which prevents TRAF6 autoubiquitination and oligomerization required for activation of NF-kappa-B and JUN. Involved in IL8-mediated granule release in neutrophils. Binds phosphoinositides. Binds inositolhexakisphosphate (InsP6). Required for atypical chemokine receptor ACKR2-induced RAC1-LIMK1-PAK1-dependent phosphorylation of cofilin (CFL1) and for the up-regulation of ACKR2 from endosomal compartment to cell membrane, increasing its efficiency in chemokine uptake and degradation. Involved in the internalization of the atypical chemokine receptor ACKR3. Negatively regulates the NOTCH signaling pathway by mediating the ubiquitination and degradation of NOTCH1 by ITCH. Participates in the recruitment of the ubiquitin-protein ligase to the receptor. In Macaca fascicularis (Crab-eating macaque), this protein is Beta-arrestin-1 (ARRB1).